The sequence spans 605 residues: Terpenoid synthase 18 (605 aa).

Asp-356, Asp-360, Asn-500, Thr-504, and Glu-508 together coordinate Mg(2+). The DDXXD motif signature appears at 356 to 360 (DDTYD).

Belongs to the terpene synthase family. Tpsa subfamily. Mg(2+) is required as a cofactor. It depends on Mn(2+) as a cofactor. In terms of tissue distribution, predominantly expressed in flowers and siliques but also in roots and leaves.

The protein localises to the cytoplasm. Its pathway is secondary metabolite biosynthesis; terpenoid biosynthesis. In Arabidopsis thaliana (Mouse-ear cress), this protein is Terpenoid synthase 18 (TPS18).